Consider the following 2183-residue polypeptide: DNA polymerase epsilon catalytic subunit A (2183 aa).

4 residues coordinate Zn(2+): Cys-2066, Cys-2069, Cys-2090, and Cys-2093. A CysA-type zinc finger spans residues Cys-2066 to Cys-2093. Residues Cys-2124, Cys-2127, Cys-2139, and Cys-2141 each coordinate [4Fe-4S] cluster. The CysB motif motif lies at Cys-2124–Cys-2141.

It belongs to the DNA polymerase type-B family. Heterotetramer. Consists of 4 subunits: POL2, DPB2, DPB3 and DPB4. [4Fe-4S] cluster serves as cofactor.

Its subcellular location is the nucleus. It carries out the reaction DNA(n) + a 2'-deoxyribonucleoside 5'-triphosphate = DNA(n+1) + diphosphate. Functionally, DNA polymerase II participates in chromosomal DNA replication. The sequence is that of DNA polymerase epsilon catalytic subunit A (POL2) from Yarrowia lipolytica (strain CLIB 122 / E 150) (Yeast).